The sequence spans 139 residues: D-ribose pyranase (139 aa).

The active-site Proton donor is His-20. Substrate is bound by residues Asp-28, His-106, and 128–130 (YAN).

It belongs to the RbsD / FucU family. RbsD subfamily. As to quaternary structure, homodecamer.

It is found in the cytoplasm. The enzyme catalyses beta-D-ribopyranose = beta-D-ribofuranose. It participates in carbohydrate metabolism; D-ribose degradation; D-ribose 5-phosphate from beta-D-ribopyranose: step 1/2. Catalyzes the interconversion of beta-pyran and beta-furan forms of D-ribose. The sequence is that of D-ribose pyranase from Salmonella agona (strain SL483).